A 179-amino-acid polypeptide reads, in one-letter code: Large ribosomal subunit protein uL5 (179 aa).

Belongs to the universal ribosomal protein uL5 family. As to quaternary structure, part of the 50S ribosomal subunit; part of the 5S rRNA/L5/L18/L25 subcomplex. Contacts the 5S rRNA and the P site tRNA. Forms a bridge to the 30S subunit in the 70S ribosome.

This is one of the proteins that bind and probably mediate the attachment of the 5S RNA into the large ribosomal subunit, where it forms part of the central protuberance. In the 70S ribosome it contacts protein S13 of the 30S subunit (bridge B1b), connecting the 2 subunits; this bridge is implicated in subunit movement. Contacts the P site tRNA; the 5S rRNA and some of its associated proteins might help stabilize positioning of ribosome-bound tRNAs. This Dehalococcoides mccartyi (strain ATCC BAA-2100 / JCM 16839 / KCTC 5957 / BAV1) protein is Large ribosomal subunit protein uL5.